Here is a 526-residue protein sequence, read N- to C-terminus: Microphthalmia-associated transcription factor (526 aa).

Phosphoserine; by MTOR is present on Ser5. Disordered regions lie at residues Glu20–Thr54 and Val155–Asn179. The span at Ser34 to Ser44 shows a compositional bias: low complexity. At Ser180 the chain carries Phosphoserine; by MAPK. A transactivation region spans residues Asp224–Glu291. Residue Ser280 is modified to Phosphoserine. Residue Lys289 forms a Glycyl lysine isopeptide (Lys-Gly) (interchain with G-Cter in SUMO) linkage. One can recognise a bHLH domain in the interval Gln311 to Leu364. Positions Lys355–Ala401 form a coiled coil. The tract at residues Leu374–Leu395 is leucine-zipper. The interval Ala401 to Cys431 is DNA-binding regulation. Ser405 carries the phosphoserine; by GSK3 modification. A Phosphoserine modification is found at Ser414. A Glycyl lysine isopeptide (Lys-Gly) (interchain with G-Cter in SUMO) cross-link involves residue Lys423. Ser491 is modified (phosphoserine). The interval Thr496 to Cys526 is disordered. The span at Ala507 to Ala519 shows a compositional bias: low complexity. At Ser516 the chain carries Phosphoserine; by RPS6KA1.

The protein belongs to the MiT/TFE family. As to quaternary structure, homodimer or heterodimer; dimerization is mediated via the coiled coil region. Efficient DNA binding requires dimerization with another bHLH protein. Binds DNA in the form of homodimer or heterodimer with either TFE3, TFEB or TFEC. Interacts with small GTPases Rag (RagA/RRAGA, RagB/RRAGB, RagC/RRAGC and/or RagD/RRAGD); promoting its recruitment to lysosomal membrane in the presence of nutrients. Interacts with KARS1. Identified in a complex with HINT1 and CTNNB1. Interacts with VSX2. When nutrients are present, phosphorylation by MTOR at Ser-5 via non-canonical mTORC1 pathway promotes ubiquitination by the SCF(BTRC) complex, followed by degradation. Phosphorylation at Ser-405 significantly enhances the ability to bind the tyrosinase promoter. Phosphorylation by MARK3/cTAK1 at Ser-280 promotes association with 14-3-3/YWHA adapters and retention in the cytosol. Phosphorylated at Ser-180 and Ser-516 following KIT signaling, triggering a short live activation: Phosphorylation at Ser-180 and Ser-516 by MAPK and RPS6KA1, respectively, activate the transcription factor activity but also promote ubiquitination and subsequent degradation by the proteasome. Phosphorylated in response to blue light (415nm). Post-translationally, ubiquitinated by the SCF(BTRC) and SCF(FBXW11) complexes following phosphorylation ar Ser-5 by MTOR, leading to its degradation by the proteasome. Ubiquitinated following phosphorylation at Ser-180, leading to subsequent degradation by the proteasome. Deubiquitinated by USP13, preventing its degradation. In the adult, expressed at high levels in the heart, skin, skeletal muscle, intestine, stomach, kidney, ovary, lung, spleen and brain. In the embryo, expressed in developing eye, ear, skin and heart. Isoform M is expressed in melanocytes and also in the embryonic and adult heart while isoform A and isoform H are more widely expressed.

Its subcellular location is the nucleus. The protein resides in the cytoplasm. It localises to the lysosome membrane. In terms of biological role, transcription factor that acts as a master regulator of melanocyte survival and differentiation as well as melanosome biogenesis. Binds to M-boxes (5'-TCATGTG-3') and symmetrical DNA sequences (E-boxes) (5'-CACGTG-3') found in the promoter of pigmentation genes, such as tyrosinase (TYR). Involved in the cellular response to amino acid availability by acting downstream of MTOR: in the presence of nutrients, MITF phosphorylation by MTOR promotes its inactivation. Upon starvation or lysosomal stress, inhibition of MTOR induces MITF dephosphorylation, resulting in transcription factor activity. Plays an important role in melanocyte development by regulating the expression of tyrosinase (TYR) and tyrosinase-related protein 1 (TYRP1). Plays a critical role in the differentiation of various cell types, such as neural crest-derived melanocytes, mast cells, osteoclasts and optic cup-derived retinal pigment epithelium. This Mus musculus (Mouse) protein is Microphthalmia-associated transcription factor (Mitf).